Reading from the N-terminus, the 257-residue chain is TLC domain-containing protein 3A (257 aa).

7 helical membrane passes run M1 to W21, L42 to C62, V77 to C97, F113 to A135, L142 to L162, G181 to W201, and F220 to L240. The 217-residue stretch at T33–D249 folds into the TLC domain.

In terms of assembly, interacts with GGT7 isoform 3 and SLC3A2. In terms of tissue distribution, highly expressed in pancreas. Detected at intermediate levels in heart, placenta and kidney, and at low levels in brain, liver and skeletal muscle. Not detected in normal lung.

It localises to the cell membrane. The sequence is that of TLC domain-containing protein 3A from Homo sapiens (Human).